We begin with the raw amino-acid sequence, 385 residues long: 1-deoxy-D-xylulose 5-phosphate reductoisomerase (385 aa).

NADPH-binding residues include threonine 13, glycine 14, serine 15, isoleucine 16, asparagine 40, and asparagine 122. Residue lysine 123 coordinates 1-deoxy-D-xylulose 5-phosphate. Position 124 (glutamate 124) interacts with NADPH. Aspartate 148 provides a ligand contact to Mn(2+). Positions 149, 150, 177, and 200 each coordinate 1-deoxy-D-xylulose 5-phosphate. Glutamate 150 is a Mn(2+) binding site. Glycine 206 is an NADPH binding site. 4 residues coordinate 1-deoxy-D-xylulose 5-phosphate: serine 213, asparagine 218, lysine 219, and glutamate 222. Residue glutamate 222 coordinates Mn(2+).

The protein belongs to the DXR family. Mg(2+) serves as cofactor. It depends on Mn(2+) as a cofactor.

It carries out the reaction 2-C-methyl-D-erythritol 4-phosphate + NADP(+) = 1-deoxy-D-xylulose 5-phosphate + NADPH + H(+). The protein operates within isoprenoid biosynthesis; isopentenyl diphosphate biosynthesis via DXP pathway; isopentenyl diphosphate from 1-deoxy-D-xylulose 5-phosphate: step 1/6. In terms of biological role, catalyzes the NADPH-dependent rearrangement and reduction of 1-deoxy-D-xylulose-5-phosphate (DXP) to 2-C-methyl-D-erythritol 4-phosphate (MEP). The chain is 1-deoxy-D-xylulose 5-phosphate reductoisomerase from Francisella tularensis subsp. tularensis (strain WY96-3418).